The following is a 317-amino-acid chain: Acetyl-coenzyme A carboxylase carboxyl transferase subunit alpha (317 aa).

Residues 33-294 (NINKEINCLR…KNRILKDLKE (262 aa)) form the CoA carboxyltransferase C-terminal domain.

The protein belongs to the AccA family. As to quaternary structure, acetyl-CoA carboxylase is a heterohexamer composed of biotin carboxyl carrier protein (AccB), biotin carboxylase (AccC) and two subunits each of ACCase subunit alpha (AccA) and ACCase subunit beta (AccD).

It localises to the cytoplasm. The enzyme catalyses N(6)-carboxybiotinyl-L-lysyl-[protein] + acetyl-CoA = N(6)-biotinyl-L-lysyl-[protein] + malonyl-CoA. Its pathway is lipid metabolism; malonyl-CoA biosynthesis; malonyl-CoA from acetyl-CoA: step 1/1. In terms of biological role, component of the acetyl coenzyme A carboxylase (ACC) complex. First, biotin carboxylase catalyzes the carboxylation of biotin on its carrier protein (BCCP) and then the CO(2) group is transferred by the carboxyltransferase to acetyl-CoA to form malonyl-CoA. In Wigglesworthia glossinidia brevipalpis, this protein is Acetyl-coenzyme A carboxylase carboxyl transferase subunit alpha.